Reading from the N-terminus, the 170-residue chain is Small ribosomal subunit protein uS9 (170 aa).

Residues 1–47 (MAETTPEQPLEEIDIDSYTTESEVPVEGEYTSESMASAFGEPQPAAG) form a disordered region.

The protein belongs to the universal ribosomal protein uS9 family.

This Streptomyces coelicolor (strain ATCC BAA-471 / A3(2) / M145) protein is Small ribosomal subunit protein uS9 (rpsI).